The sequence spans 449 residues: Phosphoglucosamine mutase (449 aa).

Residue S100 is the Phosphoserine intermediate of the active site. Mg(2+)-binding residues include S100, D241, D243, and D245. Phosphoserine is present on S100.

The protein belongs to the phosphohexose mutase family. Mg(2+) is required as a cofactor. Activated by phosphorylation.

The catalysed reaction is alpha-D-glucosamine 1-phosphate = D-glucosamine 6-phosphate. Functionally, catalyzes the conversion of glucosamine-6-phosphate to glucosamine-1-phosphate. The sequence is that of Phosphoglucosamine mutase from Clostridium botulinum (strain Loch Maree / Type A3).